The primary structure comprises 398 residues: T-box transcription factor TBX1 (398 aa).

Positions 23–72 (AAGGFPGAASPGADPYGPREPPPPPPRYDPCAAAAPGAPGPPPPPHAYPF) are disordered. A compositionally biased stretch (low complexity) spans 29-38 (GAASPGADPY). Composition is skewed to pro residues over residues 40–50 (PREPPPPPPRY) and 60–69 (APGPPPPPHA). Positions 119 to 297 (LWDEFNQLGT…SNPFAKGFRD (179 aa)) form a DNA-binding region, T-box.

As to quaternary structure, binds DNA as a dimer. Interacts with DSCR6. Interacts with NKX2-5.

The protein resides in the nucleus. Transcription factor that plays a key role in cardiovascular development by promoting pharyngeal arch segmentation during embryonic development. Also involved in craniofacial muscle development. Together with NKX2-5, acts as a regulator of asymmetric cardiac morphogenesis by promoting expression of PITX2. Acts upstream of TBX1 for the formation of the thymus and parathyroid glands from the third pharyngeal pouch. Required for hair follicle stem cell self-renewal. Binds to the palindromic T site 5'-TTCACACCTAGGTGTGAA-3' DNA sequence. This is T-box transcription factor TBX1 from Homo sapiens (Human).